We begin with the raw amino-acid sequence, 246 residues long: Ribonuclease 3 (246 aa).

Residues 30-152 (ISWIEKNLGH…MIGAIFLESG (123 aa)) form the RNase III domain. E65 is a Mg(2+) binding site. The active site involves D69. D138 and E141 together coordinate Mg(2+). Residue E141 is part of the active site. Residues 177–246 (HPKSALQEWA…AQALLDILAQ (70 aa)) form the DRBM domain.

Belongs to the ribonuclease III family. Homodimer. Mg(2+) is required as a cofactor.

It is found in the cytoplasm. It carries out the reaction Endonucleolytic cleavage to 5'-phosphomonoester.. Its function is as follows. Digests double-stranded RNA. Involved in the processing of primary rRNA transcript to yield the immediate precursors to the large and small rRNAs (23S and 16S). Processes some mRNAs, and tRNAs when they are encoded in the rRNA operon. Processes pre-crRNA and tracrRNA of type II CRISPR loci if present in the organism. This chain is Ribonuclease 3, found in Zymomonas mobilis subsp. mobilis (strain ATCC 31821 / ZM4 / CP4).